Reading from the N-terminus, the 302-residue chain is Rab effector Noc2 (302 aa).

Residues 41–158 (QRRSQCLSPG…KRSGAWFYKG (118 aa)) form the RabBD domain. An FYVE-type zinc finger spans residues 89 to 146 (GNGLSQCLLCGEVLGFLGSSSVFCKDCRKKVCTKCGIEASPGQKRPLWLCKICSEQRE). Positions 95, 98, 112, 115, 120, 123, 138, and 141 each coordinate Zn(2+). Residues 174–302 (DPHFRPLPVE…KRHTWATPRY (129 aa)) are disordered. Polar residues predominate over residues 185–197 (TETQPPSAETSRV). Phosphoserine is present on S248. Residues 258–269 (SHLSGSQSSLGS) are compositionally biased toward low complexity.

As to quaternary structure, recruited to dense-core vesicles through specific interaction with RAB27A in endocrine cells. Interacts with RAB3A, RAB3B, RAB3C and RAB3D. Interacts with ZYX. Highly expressed in pancreatic islets. High to moderate expression in adrenal gland, pituitary gland and ovary.

The protein resides in the cytoplasm. It localises to the cytoplasmic vesicle. Its subcellular location is the secretory vesicle membrane. Functionally, rab GTPase effector involved in the late steps of regulated exocytosis, both in endocrine and exocrine cells. Regulates the exocytosis of dense-core vesicles in neuroendocrine cells through interaction with RAB27A. Acts as a potential RAB3B effector protein in epithelial cells. In Mus musculus (Mouse), this protein is Rab effector Noc2 (Rph3al).